The chain runs to 88 residues: MAIKIRLARAGAKKKPFYQVVVADCRCRRDGRFIENVGTYDPNKNPAVYNLEEGKTLEWLGKGAQPTDTVKQILKKVGIWEKFVSPAA.

It belongs to the bacterial ribosomal protein bS16 family.

This chain is Small ribosomal subunit protein bS16, found in Geobacter sp. (strain M21).